We begin with the raw amino-acid sequence, 98 residues long: MLQKLRKRQRELEEKQYPDELYGFEAEIYEFFMLVAGSLDYVLANKRIPRHQRRSLEKSFFELYPDILPDMIKNDKDLYHHILLYEQVRQEICVALSN.

This is an uncharacterized protein from Bacillus subtilis (strain 168).